The following is a 290-amino-acid chain: 33 kDa chaperonin (290 aa).

Disulfide bonds link cysteine 235-cysteine 237 and cysteine 268-cysteine 271.

It belongs to the HSP33 family. Post-translationally, under oxidizing conditions two disulfide bonds are formed involving the reactive cysteines. Under reducing conditions zinc is bound to the reactive cysteines and the protein is inactive.

The protein resides in the cytoplasm. In terms of biological role, redox regulated molecular chaperone. Protects both thermally unfolding and oxidatively damaged proteins from irreversible aggregation. Plays an important role in the bacterial defense system toward oxidative stress. The sequence is that of 33 kDa chaperonin from Streptococcus pyogenes serotype M4 (strain MGAS10750).